The sequence spans 394 residues: Elongation factor Tu (394 aa).

One can recognise a tr-type G domain in the interval 10–204 (KLHINVGTIG…VLDSYIPEPK (195 aa)). The tract at residues 19–26 (GHVDHGKT) is G1. 19–26 (GHVDHGKT) serves as a coordination point for GTP. Threonine 26 is a Mg(2+) binding site. The segment at 60 to 64 (GITIN) is G2. Residues 81-84 (DCPG) form a G3 region. GTP is bound by residues 81-85 (DCPGH) and 136-139 (NKCD). Residues 136–139 (NKCD) are G4. The interval 174–176 (SAL) is G5.

The protein belongs to the TRAFAC class translation factor GTPase superfamily. Classic translation factor GTPase family. EF-Tu/EF-1A subfamily. Monomer.

Its subcellular location is the cytoplasm. The enzyme catalyses GTP + H2O = GDP + phosphate + H(+). Functionally, GTP hydrolase that promotes the GTP-dependent binding of aminoacyl-tRNA to the A-site of ribosomes during protein biosynthesis. The chain is Elongation factor Tu from Baumannia cicadellinicola subsp. Homalodisca coagulata.